We begin with the raw amino-acid sequence, 139 residues long: Natriuretic peptides A (139 aa).

The first 21 residues, 1–21 (MTALVLWGLLLLLGQHTQVNS), serve as a signal peptide directing secretion. Positions 22–114 (HVLGRPFSAS…QDLLMSLRKR (93 aa)) are excised as a propeptide. C118 and C134 are disulfide-bonded.

Belongs to the natriuretic peptide family.

The protein localises to the secreted. Functionally, hormone playing a key role in cardiovascular homeostasis through regulation of natriuresis, diuresis, and vasodilation. Has a cGMP-stimulating activity. The polypeptide is Natriuretic peptides A (nppa) (Takifugu rubripes (Japanese pufferfish)).